We begin with the raw amino-acid sequence, 369 residues long: Small ribosomal subunit biogenesis GTPase RsgA (369 aa).

One can recognise a CP-type G domain in the interval 116 to 271 (GEQLIAANLD…LIDNPGIREI (156 aa)). Residues 161 to 164 (NKID) and 213 to 221 (GSSGVGKST) each bind GTP. Zn(2+) is bound by residues Cys294, Cys299, His301, and Cys307.

This sequence belongs to the TRAFAC class YlqF/YawG GTPase family. RsgA subfamily. In terms of assembly, monomer. Associates with 30S ribosomal subunit, binds 16S rRNA. Zn(2+) serves as cofactor.

It localises to the cytoplasm. In terms of biological role, one of several proteins that assist in the late maturation steps of the functional core of the 30S ribosomal subunit. Helps release RbfA from mature subunits. May play a role in the assembly of ribosomal proteins into the subunit. Circularly permuted GTPase that catalyzes slow GTP hydrolysis, GTPase activity is stimulated by the 30S ribosomal subunit. This is Small ribosomal subunit biogenesis GTPase RsgA from Methanosarcina acetivorans (strain ATCC 35395 / DSM 2834 / JCM 12185 / C2A).